Reading from the N-terminus, the 226-residue chain is Ribonuclease S-7 (226 aa).

The signal sequence occupies residues 1 to 27 (MGITGMIYIVTMVFSLIVLILSSSTVG). Glutamine 36 contacts RNA. Cysteine 42 and cysteine 49 are joined by a disulfide. An RNA-binding site is contributed by histidine 60. The Proton donor role is filled by histidine 60. 2 N-linked (GlcNAc...) asparagine; alternate glycosylation sites follow: asparagine 74 and asparagine 77. A disulfide bridge connects residues cysteine 75 and cysteine 119. RNA-binding positions include 98–99 (NV), phenylalanine 108, 111–112 (KQ), and 115–116 (KH). The active site involves glutamine 112. Histidine 116 functions as the Proton acceptor in the catalytic mechanism. N-linked (GlcNAc...) asparagine glycosylation is found at asparagine 126, asparagine 144, and asparagine 172. Intrachain disulfides connect cysteine 183–cysteine 220 and cysteine 198–cysteine 209.

The protein belongs to the RNase T2 family. Post-translationally, the N-glycans attached at Asn-74 and Asn-77 consist of either monosaccharide (GlcNAc) or disaccharide (GlcNAc-GlcNAc) that could not be distinguished. The N-glycan at Asn-144 contains mannose and xylose, and at Asn-126 contains mannose, xylose and fucose. The N-glycan at Asn-172 consists of disaccharide (GlcNAc-GlcNAc).

It carries out the reaction a ribonucleotidyl-ribonucleotide-RNA + H2O = a 3'-end 3'-phospho-ribonucleotide-RNA + a 5'-end dephospho-ribonucleoside-RNA + H(+). Its function is as follows. Self-incompatibility (SI) is the inherited ability of a flowering plant to prevent self-fertilization by discriminating between self and non-self pollen during pollination. In many species, self-incompatibility is controlled by the single, multiallelic locus S. In Pyrus pyrifolia (Chinese pear), this protein is Ribonuclease S-7.